A 434-amino-acid polypeptide reads, in one-letter code: Serine hydroxymethyltransferase 1 (434 aa).

Residues leucine 136 and 140–142 (GHL) contribute to the (6S)-5,6,7,8-tetrahydrofolate site. Residue lysine 245 is modified to N6-(pyridoxal phosphate)lysine.

This sequence belongs to the SHMT family. As to quaternary structure, homodimer. Requires pyridoxal 5'-phosphate as cofactor.

The protein resides in the cytoplasm. The catalysed reaction is (6R)-5,10-methylene-5,6,7,8-tetrahydrofolate + glycine + H2O = (6S)-5,6,7,8-tetrahydrofolate + L-serine. It participates in one-carbon metabolism; tetrahydrofolate interconversion. Its pathway is amino-acid biosynthesis; glycine biosynthesis; glycine from L-serine: step 1/1. Its function is as follows. Catalyzes the reversible interconversion of serine and glycine with tetrahydrofolate (THF) serving as the one-carbon carrier. This reaction serves as the major source of one-carbon groups required for the biosynthesis of purines, thymidylate, methionine, and other important biomolecules. Also exhibits THF-independent aldolase activity toward beta-hydroxyamino acids, producing glycine and aldehydes, via a retro-aldol mechanism. The chain is Serine hydroxymethyltransferase 1 from Rhodospirillum rubrum (strain ATCC 11170 / ATH 1.1.1 / DSM 467 / LMG 4362 / NCIMB 8255 / S1).